A 227-amino-acid chain; its full sequence is Inner membrane lipoprotein SadB (227 aa).

Residues 1 to 21 form the signal peptide; sequence MHKNGKFIPLLALGFTFFLSG. A lipid anchor (N-palmitoyl cysteine) is attached at Cys22. Cys22 carries the S-diacylglycerol cysteine lipid modification. The stretch at 31–68 forms a coiled coil; sequence VEEMKEQQKEQETKINLLEKQQKEQEAKINLLEKQQAT.

As to quaternary structure, homotrimer.

Its subcellular location is the cell inner membrane. In terms of biological role, required for proper surface expression of the autotransporter adhesin SadA. Could be directly involved in the biogenesis of functionally active SadA. This is Inner membrane lipoprotein SadB from Salmonella typhimurium (strain LT2 / SGSC1412 / ATCC 700720).